Consider the following 323-residue polypeptide: tRNA dimethylallyltransferase (323 aa).

Residue 12–19 (GPTAAGKT) coordinates ATP. Position 14 to 19 (14 to 19 (TAAGKT)) interacts with substrate. 2 interaction with substrate tRNA regions span residues 37 to 40 (DSAL) and 161 to 165 (QRLMR).

This sequence belongs to the IPP transferase family. In terms of assembly, monomer. It depends on Mg(2+) as a cofactor.

It catalyses the reaction adenosine(37) in tRNA + dimethylallyl diphosphate = N(6)-dimethylallyladenosine(37) in tRNA + diphosphate. Functionally, catalyzes the transfer of a dimethylallyl group onto the adenine at position 37 in tRNAs that read codons beginning with uridine, leading to the formation of N6-(dimethylallyl)adenosine (i(6)A). This chain is tRNA dimethylallyltransferase, found in Pseudomonas aeruginosa (strain LESB58).